We begin with the raw amino-acid sequence, 122 residues long: MIKKPTSNVARLRKHKRVRKKVFGTPERPRLNVYRSLTNIYAQVIDDTVGRTLVSASSLEKEIKSKLGYCGNKQAAREVGKLVAQRALANGIKRVVFDRGGYIYHGRVKELAEGAREAGLEF.

This sequence belongs to the universal ribosomal protein uL18 family. In terms of assembly, part of the 50S ribosomal subunit; part of the 5S rRNA/L5/L18/L25 subcomplex. Contacts the 5S and 23S rRNAs.

In terms of biological role, this is one of the proteins that bind and probably mediate the attachment of the 5S RNA into the large ribosomal subunit, where it forms part of the central protuberance. The polypeptide is Large ribosomal subunit protein uL18 (Acetivibrio thermocellus (strain ATCC 27405 / DSM 1237 / JCM 9322 / NBRC 103400 / NCIMB 10682 / NRRL B-4536 / VPI 7372) (Clostridium thermocellum)).